Consider the following 309-residue polypeptide: MQACTLIARAKINLYLEILGSRPDGYSEVAMILQSITLADRVHLQRRPHGILLICDHPEVPADARNLAYRAAELLQRECRAELGVEIQLEKQIPVAAGLAGGSADAAAVLVGLNQLWGLGLTVGELQSLAARLGSDIPFCVQGGTQLATGRGEVLQPLADWEGIPLLLAKPRHLGVSTAWAYQAFRAHRAASLPSAGASLPTLPQVLAALERRDLLALARSLRNDLEQPVLAEHAIVGKLRQALLEAGALGSLMSGSGPTVFGIMASLERAAQARDSLCHHFPEVDFWVTQFAPTGILLEPDPQALRLP.

Lys-11 is a catalytic residue. 94-104 serves as a coordination point for ATP; sequence PVAAGLAGGSA. Asp-136 is an active-site residue.

The protein belongs to the GHMP kinase family. IspE subfamily.

It catalyses the reaction 4-CDP-2-C-methyl-D-erythritol + ATP = 4-CDP-2-C-methyl-D-erythritol 2-phosphate + ADP + H(+). Its pathway is isoprenoid biosynthesis; isopentenyl diphosphate biosynthesis via DXP pathway; isopentenyl diphosphate from 1-deoxy-D-xylulose 5-phosphate: step 3/6. In terms of biological role, catalyzes the phosphorylation of the position 2 hydroxy group of 4-diphosphocytidyl-2C-methyl-D-erythritol. The polypeptide is 4-diphosphocytidyl-2-C-methyl-D-erythritol kinase (Synechococcus sp. (strain JA-3-3Ab) (Cyanobacteria bacterium Yellowstone A-Prime)).